A 570-amino-acid polypeptide reads, in one-letter code: Peptidyl-prolyl cis-trans isomerase FKBP9 (570 aa).

The N-terminal stretch at Met1 to Ala24 is a signal peptide. PPIase FKBP-type domains are found at residues Gly54–Trp142, Ser166–His254, Gly278–His365, and Gly389–Val477. 4 N-linked (GlcNAc...) asparagine glycosylation sites follow: Asn174, Asn286, Asn302, and Asn397. EF-hand domains are found at residues Trp488–Thr523 and Asn533–Asp568. Ca(2+)-binding residues include Asp501, Asp503, Asn505, Glu507, Glu512, Asp546, Asn548, Asp550, Lys552, and Glu557. The short motif at His567–Leu570 is the Prevents secretion from ER element.

Post-translationally, phosphorylated. In terms of tissue distribution, predominantly expressed in heart, skeletal muscle, lung, liver and kidney. Lower levels found in brain, spleen and testis.

It is found in the endoplasmic reticulum lumen. It catalyses the reaction [protein]-peptidylproline (omega=180) = [protein]-peptidylproline (omega=0). Inhibited by FK506. PPIases accelerate the folding of proteins during protein synthesis. The protein is Peptidyl-prolyl cis-trans isomerase FKBP9 (Fkbp9) of Mus musculus (Mouse).